The chain runs to 405 residues: MQYTEVMVRYGELSTKGKNRKDFIGRLAGNVTRALQDFPEIEIHPKHDRMHIVLNGAPFDKIDQRLKLVFGIQTYSPTIKVEKNLDAIKKASLELMQATFKDGMTFKVNTRRSDHEFEYDTNQLNTMIGDYLFDNMDNLKVKMKKPDLVLRIEVRQDAIYISNQLLHGAGGMPVGTAGRAVMMLSGGIDSPVASYLAMKRGVEIDMVHFFSPPYTTEKALAKAKELTGILANYSGKINFIAVPFTEIQEQIKEKLPEGYLMTIQRRFMLQLADRIRAKRGGLAIFNGESVGQVASQTLESMVAINDVTSTPVLRPVATMDKTEIIKLAEQIGTFDLSIEPFEDCCTIFAPPRPKTKPKLDEARKLENRLDAEKMIQRAIDGMKITPIYPNQKFLDDKAQEDADLL.

One can recognise a THUMP domain in the interval 60–165 (DKIDQRLKLV…QDAIYISNQL (106 aa)). ATP contacts are provided by residues 183–184 (ML), 208–209 (HF), R265, G287, and Q296.

Belongs to the ThiI family.

Its subcellular location is the cytoplasm. The enzyme catalyses [ThiI sulfur-carrier protein]-S-sulfanyl-L-cysteine + a uridine in tRNA + 2 reduced [2Fe-2S]-[ferredoxin] + ATP + H(+) = [ThiI sulfur-carrier protein]-L-cysteine + a 4-thiouridine in tRNA + 2 oxidized [2Fe-2S]-[ferredoxin] + AMP + diphosphate. It carries out the reaction [ThiS sulfur-carrier protein]-C-terminal Gly-Gly-AMP + S-sulfanyl-L-cysteinyl-[cysteine desulfurase] + AH2 = [ThiS sulfur-carrier protein]-C-terminal-Gly-aminoethanethioate + L-cysteinyl-[cysteine desulfurase] + A + AMP + 2 H(+). Its pathway is cofactor biosynthesis; thiamine diphosphate biosynthesis. Catalyzes the ATP-dependent transfer of a sulfur to tRNA to produce 4-thiouridine in position 8 of tRNAs, which functions as a near-UV photosensor. Also catalyzes the transfer of sulfur to the sulfur carrier protein ThiS, forming ThiS-thiocarboxylate. This is a step in the synthesis of thiazole, in the thiamine biosynthesis pathway. The sulfur is donated as persulfide by IscS. This chain is Probable tRNA sulfurtransferase, found in Lactobacillus gasseri (strain ATCC 33323 / DSM 20243 / BCRC 14619 / CIP 102991 / JCM 1131 / KCTC 3163 / NCIMB 11718 / NCTC 13722 / AM63).